The sequence spans 147 residues: Basic phospholipase A2 beta-bungarotoxin A1 chain (147 aa).

The first 19 residues, 1-19 (MYPAHLLILSAVCVSLLGA), serve as a signal peptide directing secretion. The propeptide occupies 20–27 (ANIPPHPL). 6 disulfides stabilise this stretch: cysteine 54/cysteine 146, cysteine 56/cysteine 72, cysteine 71/cysteine 127, cysteine 78/cysteine 120, cysteine 88/cysteine 113, and cysteine 106/cysteine 118. Residues tyrosine 55, glycine 57, and glycine 59 each coordinate Ca(2+). Histidine 75 is a catalytic residue. Aspartate 76 contacts Ca(2+). Residue aspartate 121 is part of the active site.

It belongs to the phospholipase A2 family. Group I subfamily. D49 sub-subfamily. In terms of assembly, heterodimer; disulfide-linked. The A chains have phospholipase A2 activity and the B chains show homology with the basic protease inhibitors. Ca(2+) is required as a cofactor. Expressed by the venom gland.

It is found in the secreted. The enzyme catalyses a 1,2-diacyl-sn-glycero-3-phosphocholine + H2O = a 1-acyl-sn-glycero-3-phosphocholine + a fatty acid + H(+). Functionally, snake venom phospholipase A2 (PLA2) that inhibits neuromuscular transmission by blocking acetylcholine release from the nerve termini. PLA2 catalyzes the calcium-dependent hydrolysis of the 2-acyl groups in 3-sn-phosphoglycerides. The sequence is that of Basic phospholipase A2 beta-bungarotoxin A1 chain from Bungarus caeruleus (Indian krait).